Here is a 438-residue protein sequence, read N- to C-terminus: DNA primase small subunit (438 aa).

Residues E63, D127, and D129 contribute to the active site. The Zinc knuckle motif signature appears at 139–149; that stretch reads CCSGAGVCLKC.

This sequence belongs to the eukaryotic-type primase small subunit family. Heterodimer of a catalytic subunit Prim1 and a regulatory subunit Prim2, also known as the DNA primase complex. Component of the alpha DNA polymerase complex (also known as the alpha DNA polymerase-primase complex) consisting of four subunits: the catalytic subunit PolA1, the regulatory subunit PolA2, and the primase complex subunits Prim1 and Prim2 respectively. PolA1 associates with the DNA primase complex before association with PolA2. Mg(2+) is required as a cofactor. It depends on Mn(2+) as a cofactor. As to expression, expressed in embryos (at protein level).

Its activity is regulated as follows. The presence of the regulatory subunit Prim2 accelerates the kinetics of initiation and primer extension. Catalytic subunit of the DNA primase complex and component of the DNA polymerase alpha complex (also known as the alpha DNA polymerase-primase complex) which play an essential role in the initiation of DNA synthesis. During the S phase of the cell cycle, the DNA polymerase alpha complex (composed of a catalytic subunit PolA1, an accessory subunit PolA2 and two primase subunits, the catalytic subunit Prim1 and the regulatory subunit Prim2) is recruited to DNA at the replicative forks. The primase subunit of the polymerase alpha complex initiates DNA synthesis by oligomerising short RNA primers on both leading and lagging strands. These primers are initially extended by the polymerase alpha catalytic subunit and subsequently transferred to polymerase delta and polymerase epsilon for processive synthesis on the lagging and leading strand, respectively. In the primase complex, both subunits are necessary for the initial di-nucleotide formation, but the extension of the primer depends only on the catalytic subunit. Can add both ribo- and deoxynucleotides during elongation of the primers. Binds single stranded DNA. The chain is DNA primase small subunit from Drosophila melanogaster (Fruit fly).